Consider the following 678-residue polypeptide: RNA helicase NPH-II (678 aa).

The Helicase ATP-binding domain maps to 175-351; sequence FTSWARRVPV…EFFAESVFVH (177 aa). 188–195 provides a ligand contact to ATP; the sequence is GDTGVGKT. The DEXH box signature appears at 300–303; the sequence is DEVH. One can recognise a Helicase C-terminal domain in the interval 371–546; the sequence is PLNRFMYIEE…VFDLQLPEDL (176 aa).

The protein belongs to the DEAD box helicase family. DEAH subfamily. As to quaternary structure, monomer.

The protein localises to the virion. It catalyses the reaction ATP + H2O = ADP + phosphate + H(+). In terms of biological role, NTP-dependent helicase that catalyzes unidirectional unwinding of 3'tailed duplex RNAs and plays an important role during transcription of early mRNAs, presumably by preventing R-loop formation behind the elongating RNA polymerase. Might also play a role in the export of newly synthesized mRNA chains out of the core into the cytoplasm. Required for replication and propagation of viral particles. In Oryctolagus cuniculus (Rabbit), this protein is RNA helicase NPH-II (OPG084).